Here is a 189-residue protein sequence, read N- to C-terminus: Glycerol-3-phosphate acyltransferase (189 aa).

A run of 5 helical transmembrane segments spans residues 1-21 (MFWLLAILAYLLGSLSFAILL), 51-71 (LAILTLLGDLCKGLLPVLIAS), 77-97 (LQDQAWIGVCAVIGHLFPLYF), 111-131 (MLLGLYPPAALLAVCAWLLTF), and 151-171 (LLAWQEPAALLPMSTLTLLIV).

Belongs to the PlsY family. Probably interacts with PlsX.

It is found in the cell inner membrane. The catalysed reaction is an acyl phosphate + sn-glycerol 3-phosphate = a 1-acyl-sn-glycero-3-phosphate + phosphate. It functions in the pathway lipid metabolism; phospholipid metabolism. Functionally, catalyzes the transfer of an acyl group from acyl-phosphate (acyl-PO(4)) to glycerol-3-phosphate (G3P) to form lysophosphatidic acid (LPA). This enzyme utilizes acyl-phosphate as fatty acyl donor, but not acyl-CoA or acyl-ACP. This chain is Glycerol-3-phosphate acyltransferase, found in Pseudomonas fluorescens (strain Pf0-1).